Consider the following 368-residue polypeptide: MVLEVSDHQVLNDAEVAALLENFSSSYDYGENESDSCCTSPPCPQDFSLNFDRAFLPALYSLLFLLGLLGNGAVAAVLLSRRTALSSTDTFLLHLAVADTLLVLTLPLWAVDAAVQWVFGSGLCKVAGALFNINFYAGALLLACISFDRYLNIVHATQLYRRGPPARVTLTCLAVWGLCLLFALPDFIFLSAHHDERLNATHCQYNFPQVGRTALRVLQLVAGFLLPLLVMAYCYAHILAVLLVSRGQRRLRAMRLVVVVVVAFALCWTPYHLVVLVDILMDLGALARNCGRESRVDVAKSVTSGLGYMHCCLNPLLYAFVGVKFRERMWMLLLRLGCPNQRGLQRQPSSSRRDSSWSETSEASYSGL.

Residues 1-53 (MVLEVSDHQVLNDAEVAALLENFSSSYDYGENESDSCCTSPPCPQDFSLNFDR) lie on the Extracellular side of the membrane. Asn22 carries N-linked (GlcNAc...) asparagine glycosylation. Sulfotyrosine occurs at positions 27 and 29. Asn32 is a glycosylation site (N-linked (GlcNAc...) asparagine). The chain crosses the membrane as a helical span at residues 54 to 80 (AFLPALYSLLFLLGLLGNGAVAAVLLS). The Cytoplasmic segment spans residues 81 to 89 (RRTALSSTD). The chain crosses the membrane as a helical span at residues 90 to 110 (TFLLHLAVADTLLVLTLPLWA). Residues 111-125 (VDAAVQWVFGSGLCK) are Extracellular-facing. An intrachain disulfide couples Cys124 to Cys203. Residues 126-147 (VAGALFNINFYAGALLLACISF) traverse the membrane as a helical segment. The Cytoplasmic portion of the chain corresponds to 148–169 (DRYLNIVHATQLYRRGPPARVT). A helical membrane pass occupies residues 170-189 (LTCLAVWGLCLLFALPDFIF). Residues 190 to 212 (LSAHHDERLNATHCQYNFPQVGR) are Extracellular-facing. A helical transmembrane segment spans residues 213–233 (TALRVLQLVAGFLLPLLVMAY). Residues 234–255 (CYAHILAVLLVSRGQRRLRAMR) lie on the Cytoplasmic side of the membrane. A helical transmembrane segment spans residues 256–277 (LVVVVVVAFALCWTPYHLVVLV). At 278–298 (DILMDLGALARNCGRESRVDV) the chain is on the extracellular side. A helical transmembrane segment spans residues 299 to 321 (AKSVTSGLGYMHCCLNPLLYAFV). The Cytoplasmic portion of the chain corresponds to 322–368 (GVKFRERMWMLLLRLGCPNQRGLQRQPSSSRRDSSWSETSEASYSGL). Positions 342-368 (RGLQRQPSSSRRDSSWSETSEASYSGL) are disordered. The span at 357–368 (WSETSEASYSGL) shows a compositional bias: low complexity.

The protein belongs to the G-protein coupled receptor 1 family. As to quaternary structure, homomer. Forms heteromers with ACKR4. In terms of assembly, interacts with PF4/CXCL4. In terms of processing, sulfation on Tyr-27 and Tyr-29 is essential for CXCL10 binding and subsequent signal transduction induction. Post-translationally, N-glycosylated. As to expression, isoform 1 and isoform 2 are mainly expressed in heart, kidney, liver and skeletal muscle. Isoform 1 is also expressed in placenta. Isoform 2 is expressed in endothelial cells. Expressed in T-cells (at protein level).

It localises to the cell membrane. In terms of biological role, receptor for the C-X-C chemokine CXCL9, CXCL10 and CXCL11 and mediates the proliferation, survival and angiogenic activity of human mesangial cells (HMC) through a heterotrimeric G-protein signaling pathway. Binds to CCL21. Probably promotes cell chemotaxis response. Upon activation by PF4, induces activated T-lymphocytes migration mediated via downstream Ras/extracellular signal-regulated kinase (ERK) signaling. Its function is as follows. Receptor for the C-X-C chemokine CXCL4 and also mediates the inhibitory activities of CXCL9, CXCL10 and CXCL11 on the proliferation, survival and angiogenic activity of human microvascular endothelial cells (HMVEC) through a cAMP-mediated signaling pathway. Does not promote cell chemotaxis respons. Interaction with CXCL4 or CXCL10 leads to activation of the p38MAPK pathway and contributes to inhibition of angiogenesis. Overexpression in renal cancer cells down-regulates expression of the anti-apoptotic protein HMOX1 and promotes apoptosis. Mediates the activity of CXCL11. This Homo sapiens (Human) protein is C-X-C chemokine receptor type 3 (CXCR3).